The following is a 314-amino-acid chain: Inactive protein FRIGIDA (314 aa).

Residues 1-18 (MSNYPPTVAAQPTTTANP) are compositionally biased toward low complexity. Positions 1-31 (MSNYPPTVAAQPTTTANPLLQRHQSEQRRRE) are disordered. The stretch at 67–97 (VAVETFKRQFDDLQKHIESIENAIDSKLESN) forms a coiled coil.

This sequence belongs to the Frigida family.

The protein localises to the nucleus. The chain is Inactive protein FRIGIDA (FRI) from Arabidopsis thaliana (Mouse-ear cress).